Reading from the N-terminus, the 638-residue chain is Probable lysine-specific demethylase 4F (638 aa).

The region spanning 15 to 57 (IMTFYPTMEEFADFNTYVAYMESQGAHRAGLAKVIPPKEWKAR) is the JmjN domain. Residue tyrosine 133 coordinates 2-oxoglutarate. A JmjC domain is found at 143 to 309 (EESTKQWNLG…YGKVASQCSC (167 aa)). Fe cation-binding residues include histidine 189 and glutamate 191. 2-oxoglutarate contacts are provided by asparagine 199 and lysine 207. The Zn(2+) site is built by cysteine 235 and histidine 241. Lysine 242 is a binding site for 2-oxoglutarate. Histidine 277 lines the Fe cation pocket. Zn(2+) is bound by residues cysteine 307 and cysteine 309. Residues 426–474 (PCRGCGRGRGRGRGRGRRPRELGTEETTVQSAAKRRLSVGTGSRAPGRK) form a disordered region. Positions 431–443 (GRGRGRGRGRGRR) are enriched in basic residues.

Belongs to the JHDM3 histone demethylase family. It depends on Fe(2+) as a cofactor.

The protein resides in the nucleus. The catalysed reaction is N(6),N(6),N(6)-trimethyl-L-lysyl(9)-[histone H3] + 2 2-oxoglutarate + 2 O2 = N(6)-methyl-L-lysyl(9)-[histone H3] + 2 formaldehyde + 2 succinate + 2 CO2. Its function is as follows. Probable histone demethylase that specifically demethylates 'Lys-9' of histone H3, thereby playing a central role in histone code. In Homo sapiens (Human), this protein is Probable lysine-specific demethylase 4F.